The following is a 194-amino-acid chain: dCTP deaminase (194 aa).

Residues 110–115, Asp-128, 136–138, Tyr-171, Lys-178, and Gln-182 contribute to the dCTP site; these read RSSLAR and VLE. The Proton donor/acceptor role is filled by Glu-138.

Belongs to the dCTP deaminase family. As to quaternary structure, homotrimer.

The catalysed reaction is dCTP + H2O + H(+) = dUTP + NH4(+). The protein operates within pyrimidine metabolism; dUMP biosynthesis; dUMP from dCTP (dUTP route): step 1/2. In terms of biological role, catalyzes the deamination of dCTP to dUTP. The chain is dCTP deaminase from Histophilus somni (strain 2336) (Haemophilus somnus).